A 419-amino-acid chain; its full sequence is UDP-N-acetylglucosamine 1-carboxyvinyltransferase (419 aa).

Position 22–23 (22–23 (KN)) interacts with phosphoenolpyruvate. Residue R93 coordinates UDP-N-acetyl-alpha-D-glucosamine. Catalysis depends on C117, which acts as the Proton donor. Position 117 is a 2-(S-cysteinyl)pyruvic acid O-phosphothioketal (C117). D307 and I329 together coordinate UDP-N-acetyl-alpha-D-glucosamine.

Belongs to the EPSP synthase family. MurA subfamily.

The protein resides in the cytoplasm. It carries out the reaction phosphoenolpyruvate + UDP-N-acetyl-alpha-D-glucosamine = UDP-N-acetyl-3-O-(1-carboxyvinyl)-alpha-D-glucosamine + phosphate. It participates in cell wall biogenesis; peptidoglycan biosynthesis. In terms of biological role, cell wall formation. Adds enolpyruvyl to UDP-N-acetylglucosamine. The protein is UDP-N-acetylglucosamine 1-carboxyvinyltransferase of Pseudoalteromonas atlantica (strain T6c / ATCC BAA-1087).